The chain runs to 235 residues: Small ribosomal subunit protein uS3 (235 aa).

The KH type-2 domain occupies 39–107; the sequence is VRKFLNKELM…PAQINIAEVK (69 aa).

Belongs to the universal ribosomal protein uS3 family. In terms of assembly, part of the 30S ribosomal subunit. Forms a tight complex with proteins S10 and S14.

In terms of biological role, binds the lower part of the 30S subunit head. Binds mRNA in the 70S ribosome, positioning it for translation. The chain is Small ribosomal subunit protein uS3 from Actinobacillus succinogenes (strain ATCC 55618 / DSM 22257 / CCUG 43843 / 130Z).